A 161-amino-acid polypeptide reads, in one-letter code: Nucleotide-binding protein Pcar_0033 (161 aa).

Belongs to the YajQ family.

Nucleotide-binding protein. The protein is Nucleotide-binding protein Pcar_0033 of Syntrophotalea carbinolica (strain DSM 2380 / NBRC 103641 / GraBd1) (Pelobacter carbinolicus).